A 77-amino-acid chain; its full sequence is MKSKDTLKWFPAQLPEVRIILGDAVVEVAKQGRPINTRTLLDYIEGNIKKKSWLDNKELLQTAISVLKDNQNLNGKM.

This sequence to E.coli YnaE.

This is Cold shock protein YdfK (ydfK) from Escherichia coli (strain K12).